A 792-amino-acid chain; its full sequence is Cullin-4 (792 aa).

Positions 1–10 (MSLPTKRSTF) are enriched in polar residues. Positions 1–43 (MSLPTKRSTFSAASASDDSSYSSPPMKKAKNDLHHSPQHPNTA) are disordered. Residues 11-23 (SAASASDDSSYSS) show a composition bias toward low complexity. The region spanning 724-784 (DRQYQIDAAI…REYLEREKSN (61 aa)) is the Cullin neddylation domain. Lys-738 participates in a covalent cross-link: Glycyl lysine isopeptide (Lys-Gly) (interchain with G-Cter in NEDD8).

It belongs to the cullin family. In terms of assembly, interacts with COP10, CSN3, CSN4, CSN5, CSN8, DDB1A, DDB1B, DDB2, DET1 and RBX1. Post-translationally, neddylated (rubylated). Deneddylated via its interaction with the COP9 signalosome (CSN) complex. Ubiquitous.

The protein resides in the nucleus. The protein operates within protein modification; protein ubiquitination. Its function is as follows. Component of the CUL4-RBX1-CDD (COP10-DDB1a-DET1) E3 ubiquitin-protein ligase complex which mediates the ubiquitination and subsequent proteasomal degradation of target proteins. Participates in the CDD complex to light-mediated control of development. May repress photomorphogenesis through enhancing COP1 E3 ubiquitin-protein ligase activity. Acts together with the CUL4-DDB1-COP1-SPA E3 ubiquitin-protein ligase complexes in the repression of photomorphogenesis and flowering time. Component ot the CUL4-RBX1-DDB1-PRL1 E3 ubiquitin-protein ligase complex which mediates ubiquitination and subsequent degradation of AKIN10. Component of the CUL4-RBX1-DDB1-DWA1/DWA2 E3 ubiquitin-protein ligase complex that acts as a negative regulator in abscisic acid (ABA) signaling and may target ABI5 for degradation. The sequence is that of Cullin-4 (CUL4) from Arabidopsis thaliana (Mouse-ear cress).